The sequence spans 1498 residues: Transposon Ty3-I Gag-Pol polyprotein (1498 aa).

A CCHC-type zinc finger spans residues arginine 265–alanine 282. The active-site For protease activity; shared with dimeric partner is the aspartate 336. The interval threonine 470–proline 490 is disordered. Residues leucine 646 to isoleucine 823 form the Reverse transcriptase domain. The Mg(2+) site is built by aspartate 712, aspartate 774, and aspartate 775. Residues aspartate 919–tyrosine 1037 form the RNase H Ty3/gyspy-type domain. Residues histidine 1132–cysteine 1171 form an integrase-type zinc finger-like region. The Integrase catalytic domain maps to leucine 1185–leucine 1350. Residues aspartate 1201 and aspartate 1262 each contribute to the Mg(2+) site.

In terms of assembly, the protease is a homodimer, whose active site consists of two apposed aspartic acid residues. Post-translationally, initially, virus-like particles (VLPs) are composed of the structural unprocessed proteins Gag and Gag-Pol, and also contain the host initiator methionine tRNA (tRNA(i)-Met) which serves as a primer for minus-strand DNA synthesis, and a dimer of genomic Ty RNA. Processing of the polyproteins occurs within the particle and proceeds by an ordered pathway, called maturation. First, the protease (PR) is released by autocatalytic cleavage of the Gag-Pol polyprotein, and this cleavage is a prerequisite for subsequent processing at the remaining sites to release the mature structural and catalytic proteins. Maturation takes place prior to the RT reaction and is required to produce transposition-competent VLPs.

It localises to the cytoplasm. The protein resides in the nucleus. It carries out the reaction DNA(n) + a 2'-deoxyribonucleoside 5'-triphosphate = DNA(n+1) + diphosphate. The enzyme catalyses Endonucleolytic cleavage to 5'-phosphomonoester.. Functionally, capsid protein (CA) is the structural component of the virus-like particle (VLP), forming the shell that encapsulates the genomic RNA-nucleocapsid complex. Nucleocapsid protein p11 (NC) forms the nucleocore that coats the retro-elements dimeric RNA. Binds these RNAs through its zinc fingers. Promotes primer tRNA(i)-Met annealing to the multipartite primer-binding site (PBS), dimerization of Ty3 RNA and initiation of reverse transcription. Its function is as follows. The aspartyl protease (PR) mediates the proteolytic cleavages of the Gag and Gag-Pol polyproteins after assembly of the VLP. In terms of biological role, reverse transcriptase/ribonuclease H (RT) is a multifunctional enzyme that catalyzes the conversion of the retro-elements RNA genome into dsDNA within the VLP. The enzyme displays a DNA polymerase activity that can copy either DNA or RNA templates, and a ribonuclease H (RNase H) activity that cleaves the RNA strand of RNA-DNA heteroduplexes during plus-strand synthesis and hydrolyzes RNA primers. The conversion leads to a linear dsDNA copy of the retrotransposon that includes long terminal repeats (LTRs) at both ends. Functionally, integrase (IN) targets the VLP to the nucleus, where a subparticle preintegration complex (PIC) containing at least integrase and the newly synthesized dsDNA copy of the retrotransposon must transit the nuclear membrane. Once in the nucleus, integrase performs the integration of the dsDNA into the host genome. The protein is Transposon Ty3-I Gag-Pol polyprotein (TY3B-I) of Saccharomyces cerevisiae (strain ATCC 204508 / S288c) (Baker's yeast).